A 440-amino-acid chain; its full sequence is Transposon Ty1-DR2 Gag polyprotein (440 aa).

Polar residues-rich tracts occupy residues 1 to 31 and 137 to 168; these read MESQ…TTQD and VGTH…TNQH. Disordered regions lie at residues 1 to 75, 137 to 174, and 350 to 440; these read MESQ…PQAA, VGTH…PPPI, and QQES…PGTY. The RNA-binding stretch occupies residues 299–401; it reads NNGIPINNKV…NSQSRTARAH (103 aa). Residues 363–372 are compositionally biased toward basic and acidic residues; that stretch reads SPSDEKKDSR. The span at 373–409 shows a compositional bias: polar residues; it reads TYTNTTKPKSITRNSQKPNNSQSRTARAHNVSTSNNF. Over residues 429 to 440 the composition is skewed to basic and acidic residues; sequence NKHDLHLRPGTY.

Homotrimer.

It is found in the cytoplasm. Capsid protein (CA) is the structural component of the virus-like particle (VLP), forming the shell that encapsulates the retrotransposons dimeric RNA genome. The particles are assembled from trimer-clustered units and there are holes in the capsid shells that allow for the diffusion of macromolecules. CA also has nucleocapsid-like chaperone activity, promoting primer tRNA(i)-Met annealing to the multipartite primer-binding site (PBS), dimerization of Ty1 RNA and initiation of reverse transcription. The protein is Transposon Ty1-DR2 Gag polyprotein (TY1A-DR2) of Saccharomyces cerevisiae (strain ATCC 204508 / S288c) (Baker's yeast).